The following is a 164-amino-acid chain: DNA-binding protein inhibitor ID-1 (164 aa).

The 53-residue stretch at 46-98 (LPALLDEQQVNVLLYDMNGCYSRLKELVPTLPQNRKVSKVEILQHVIDYIRDL) folds into the bHLH domain. Residues 91-104 (VIDYIRDLQLELNS) carry the Nuclear export signal motif.

In terms of assembly, heterodimer with other HLH proteins. Interacts with COPS5, IFI204, GATA4, NKX2-5, CLOCK and BMAL1. Isoform Short can form homodimers. In terms of processing, phosphorylated in vitro by PKA and PKC.

It localises to the cytoplasm. The protein localises to the nucleus. In terms of biological role, transcriptional regulator (lacking a basic DNA binding domain) which negatively regulates the basic helix-loop-helix (bHLH) transcription factors by forming heterodimers and inhibiting their DNA binding and transcriptional activity. Implicated in regulating a variety of cellular processes, including cellular growth, senescence, differentiation, apoptosis, angiogenesis, and neoplastic transformation. Inhibits skeletal muscle and cardiac myocyte differentiation. Regulates the circadian clock by repressing the transcriptional activator activity of the CLOCK-BMAL1 heterodimer. This chain is DNA-binding protein inhibitor ID-1 (Id1), found in Rattus norvegicus (Rat).